We begin with the raw amino-acid sequence, 295 residues long: Ribosomal RNA small subunit methyltransferase A (295 aa).

S-adenosyl-L-methionine contacts are provided by Asn31, Leu33, Gly58, Glu79, Asp104, and Asn129.

It belongs to the class I-like SAM-binding methyltransferase superfamily. rRNA adenine N(6)-methyltransferase family. RsmA subfamily.

Its subcellular location is the cytoplasm. The enzyme catalyses adenosine(1518)/adenosine(1519) in 16S rRNA + 4 S-adenosyl-L-methionine = N(6)-dimethyladenosine(1518)/N(6)-dimethyladenosine(1519) in 16S rRNA + 4 S-adenosyl-L-homocysteine + 4 H(+). In terms of biological role, specifically dimethylates two adjacent adenosines (A1518 and A1519) in the loop of a conserved hairpin near the 3'-end of 16S rRNA in the 30S particle. May play a critical role in biogenesis of 30S subunits. This is Ribosomal RNA small subunit methyltransferase A from Leuconostoc citreum (strain KM20).